Consider the following 390-residue polypeptide: Pyruvate dehydrogenase E1 component subunit alpha-1, mitochondrial (390 aa).

Residues 1–15 (MAAAILLRRVPPARA) constitute a mitochondrion transit peptide. Residues His-91, Tyr-117, Arg-118, Gly-166, Val-168, Asp-197, Gly-198, Ala-199, Asn-226, and Tyr-228 each contribute to the pyruvate site. Thiamine diphosphate is bound by residues Tyr-117, Arg-118, Gly-166, Val-168, Asp-197, Gly-198, Ala-199, and Asn-226. Asp-197 lines the Mg(2+) pocket. Asn-226 and Tyr-228 together coordinate Mg(2+). A thiamine diphosphate-binding site is contributed by His-292. The tract at residues 293–312 (SMSDPGSTYRTRDEISGVRQ) is disordered. A compositionally biased stretch (basic and acidic residues) spans 302 to 312 (RTRDEISGVRQ).

As to quaternary structure, tetramer of 2 alpha and 2 beta subunits. Requires thiamine diphosphate as cofactor. Mg(2+) is required as a cofactor.

Its subcellular location is the mitochondrion matrix. The enzyme catalyses N(6)-[(R)-lipoyl]-L-lysyl-[protein] + pyruvate + H(+) = N(6)-[(R)-S(8)-acetyldihydrolipoyl]-L-lysyl-[protein] + CO2. Functionally, the pyruvate dehydrogenase complex catalyzes the overall conversion of pyruvate to acetyl-CoA and CO(2). It contains multiple copies of three enzymatic components: pyruvate dehydrogenase (E1), dihydrolipoamide acetyltransferase (E2) and lipoamide dehydrogenase (E3). The polypeptide is Pyruvate dehydrogenase E1 component subunit alpha-1, mitochondrial (Oryza sativa subsp. japonica (Rice)).